We begin with the raw amino-acid sequence, 148 residues long: NADH-quinone oxidoreductase subunit K 2 (148 aa).

Transmembrane regions (helical) follow at residues 3-23 (LAYPAVLAALLFCVGLYGVLA), 28-48 (ILVLMSVELMLNAVNLNLVAF), and 64-84 (LFTIAIAAAEIGIGLAIVLAV). Residues 96–148 (LRDTAETDAAETLPDDAGTGPSGTDAAPNGDTTTATGRPGDNAGKNKKAEATR) form a disordered region.

Belongs to the complex I subunit 4L family. In terms of assembly, NDH-1 is composed of 14 different subunits. Subunits NuoA, H, J, K, L, M, N constitute the membrane sector of the complex.

It localises to the cell membrane. The enzyme catalyses a quinone + NADH + 5 H(+)(in) = a quinol + NAD(+) + 4 H(+)(out). In terms of biological role, NDH-1 shuttles electrons from NADH, via FMN and iron-sulfur (Fe-S) centers, to quinones in the respiratory chain. The immediate electron acceptor for the enzyme in this species is believed to be a menaquinone. Couples the redox reaction to proton translocation (for every two electrons transferred, four hydrogen ions are translocated across the cytoplasmic membrane), and thus conserves the redox energy in a proton gradient. The chain is NADH-quinone oxidoreductase subunit K 2 from Streptomyces griseus subsp. griseus (strain JCM 4626 / CBS 651.72 / NBRC 13350 / KCC S-0626 / ISP 5235).